The sequence spans 747 residues: Beta-glucosidase BoGH3A (747 aa).

An N-terminal signal peptide occupies residues 1 to 26 (MIIGIMKTFLLTICFLSVQTGMVAIA). The active site involves aspartate 273.

Belongs to the glycosyl hydrolase 3 family.

It is found in the periplasm. The enzyme catalyses Hydrolysis of terminal, non-reducing beta-D-glucosyl residues with release of beta-D-glucose.. It participates in glucan metabolism; xyloglucan degradation. Functionally, catalyzes the hydrolysis of terminal, non-reducing beta-D-glucosyl residues with release of beta-D-glucose in xyloglucan degradation, leading to remove the backbone 'G' units. The polypeptide is Beta-glucosidase BoGH3A (Bacteroides ovatus (strain ATCC 8483 / DSM 1896 / JCM 5824 / BCRC 10623 / CCUG 4943 / NCTC 11153)).